The sequence spans 335 residues: 4-hydroxy-3-methylbut-2-enyl diphosphate reductase 2 (335 aa).

[4Fe-4S] cluster is bound at residue Cys-37. (2E)-4-hydroxy-3-methylbut-2-enyl diphosphate-binding residues include His-66 and His-99. 2 residues coordinate dimethylallyl diphosphate: His-66 and His-99. The isopentenyl diphosphate site is built by His-66 and His-99. Cys-121 is a binding site for [4Fe-4S] cluster. His-149 provides a ligand contact to (2E)-4-hydroxy-3-methylbut-2-enyl diphosphate. His-149 provides a ligand contact to dimethylallyl diphosphate. His-149 contacts isopentenyl diphosphate. Glu-151 acts as the Proton donor in catalysis. (2E)-4-hydroxy-3-methylbut-2-enyl diphosphate is bound at residue Thr-189. Cys-219 provides a ligand contact to [4Fe-4S] cluster. 4 residues coordinate (2E)-4-hydroxy-3-methylbut-2-enyl diphosphate: Ser-247, Ser-248, Asn-249, and Ser-292. The dimethylallyl diphosphate site is built by Ser-247, Ser-248, Asn-249, and Ser-292. Isopentenyl diphosphate contacts are provided by Ser-247, Ser-248, Asn-249, and Ser-292.

This sequence belongs to the IspH family. It depends on [4Fe-4S] cluster as a cofactor.

The enzyme catalyses isopentenyl diphosphate + 2 oxidized [2Fe-2S]-[ferredoxin] + H2O = (2E)-4-hydroxy-3-methylbut-2-enyl diphosphate + 2 reduced [2Fe-2S]-[ferredoxin] + 2 H(+). The catalysed reaction is dimethylallyl diphosphate + 2 oxidized [2Fe-2S]-[ferredoxin] + H2O = (2E)-4-hydroxy-3-methylbut-2-enyl diphosphate + 2 reduced [2Fe-2S]-[ferredoxin] + 2 H(+). The protein operates within isoprenoid biosynthesis; dimethylallyl diphosphate biosynthesis; dimethylallyl diphosphate from (2E)-4-hydroxy-3-methylbutenyl diphosphate: step 1/1. It functions in the pathway isoprenoid biosynthesis; isopentenyl diphosphate biosynthesis via DXP pathway; isopentenyl diphosphate from 1-deoxy-D-xylulose 5-phosphate: step 6/6. Its function is as follows. Catalyzes the conversion of 1-hydroxy-2-methyl-2-(E)-butenyl 4-diphosphate (HMBPP) into a mixture of isopentenyl diphosphate (IPP) and dimethylallyl diphosphate (DMAPP). Acts in the terminal step of the DOXP/MEP pathway for isoprenoid precursor biosynthesis. Has a higher activity compared with LytB2. Is essential for M.tuberculosis growth in vitro. In Mycobacterium tuberculosis (strain ATCC 25618 / H37Rv), this protein is 4-hydroxy-3-methylbut-2-enyl diphosphate reductase 2.